We begin with the raw amino-acid sequence, 378 residues long: Polygalacturonase (378 aa).

A signal peptide spans 1–20; that stretch reads MILTRSVVLGFLGSASLALA. A disulfide bridge links Cys-39 with Cys-57. PbH1 repeat units lie at residues 172-203, 204-225, 226-246, 255-276, and 284-306; these read SSGLTISGVTIDNKNGDTNSLGHNTDGFDIGD, SDSITITGATVYNQDDCLAINS, GTNIVFSGGYCSGGHGLSIGS, VETVHISSTQVVNSQNGVRVKA, and IKGVTFQDITLSGITSQGITIRQ. Asp-218 functions as the Proton donor in the catalytic mechanism. Cys-220 and Cys-236 are oxidised to a cystine. The active site involves His-240. 2 disulfide bridges follow: Cys-346-Cys-352 and Cys-370-Cys-378.

The protein belongs to the glycosyl hydrolase 28 family.

Its subcellular location is the secreted. The enzyme catalyses (1,4-alpha-D-galacturonosyl)n+m + H2O = (1,4-alpha-D-galacturonosyl)n + (1,4-alpha-D-galacturonosyl)m.. This chain is Polygalacturonase (PEPG1), found in Penicillium expansum (Blue mold rot fungus).